The chain runs to 562 residues: NAD-dependent malic enzyme (562 aa).

Tyr101 (proton donor) is an active-site residue. An NAD(+)-binding site is contributed by Arg154. Lys172 serves as the catalytic Proton acceptor. Positions 243, 244, and 267 each coordinate a divalent metal cation. Residues Asp267 and Asn415 each coordinate NAD(+).

It belongs to the malic enzymes family. As to quaternary structure, homotetramer. Mg(2+) serves as cofactor. Mn(2+) is required as a cofactor.

The enzyme catalyses (S)-malate + NAD(+) = pyruvate + CO2 + NADH. It carries out the reaction oxaloacetate + H(+) = pyruvate + CO2. This Colwellia psychrerythraea (strain 34H / ATCC BAA-681) (Vibrio psychroerythus) protein is NAD-dependent malic enzyme.